The sequence spans 507 residues: ATP synthase subunit alpha, chloroplastic (507 aa).

170–177 (GDRQTGKT) is an ATP binding site.

The protein belongs to the ATPase alpha/beta chains family. As to quaternary structure, F-type ATPases have 2 components, CF(1) - the catalytic core - and CF(0) - the membrane proton channel. CF(1) has five subunits: alpha(3), beta(3), gamma(1), delta(1), epsilon(1). CF(0) has four main subunits: a, b, b' and c.

Its subcellular location is the plastid. The protein localises to the chloroplast thylakoid membrane. The enzyme catalyses ATP + H2O + 4 H(+)(in) = ADP + phosphate + 5 H(+)(out). In terms of biological role, produces ATP from ADP in the presence of a proton gradient across the membrane. The alpha chain is a regulatory subunit. This is ATP synthase subunit alpha, chloroplastic from Illicium oligandrum (Star anise).